The sequence spans 138 residues: Large ribosomal subunit protein bL19 (138 aa).

The protein belongs to the bacterial ribosomal protein bL19 family.

In terms of biological role, this protein is located at the 30S-50S ribosomal subunit interface and may play a role in the structure and function of the aminoacyl-tRNA binding site. The protein is Large ribosomal subunit protein bL19 of Leptospira interrogans serogroup Icterohaemorrhagiae serovar copenhageni (strain Fiocruz L1-130).